Consider the following 203-residue polypeptide: ATP-dependent Clp protease proteolytic subunit 2 (203 aa).

The Nucleophile role is filled by S101. Residue H126 is part of the active site.

Belongs to the peptidase S14 family. Fourteen ClpP subunits assemble into 2 heptameric rings which stack back to back to give a disk-like structure with a central cavity, resembling the structure of eukaryotic proteasomes.

It is found in the cytoplasm. The catalysed reaction is Hydrolysis of proteins to small peptides in the presence of ATP and magnesium. alpha-casein is the usual test substrate. In the absence of ATP, only oligopeptides shorter than five residues are hydrolyzed (such as succinyl-Leu-Tyr-|-NHMec, and Leu-Tyr-Leu-|-Tyr-Trp, in which cleavage of the -Tyr-|-Leu- and -Tyr-|-Trp bonds also occurs).. Its function is as follows. Cleaves peptides in various proteins in a process that requires ATP hydrolysis. Has a chymotrypsin-like activity. Plays a major role in the degradation of misfolded proteins. This is ATP-dependent Clp protease proteolytic subunit 2 from Prochlorococcus marinus (strain MIT 9312).